Here is a 1178-residue protein sequence, read N- to C-terminus: DNA-directed RNA polymerase I subunit 2 (1178 aa).

The C4-type zinc-finger motif lies at 1097–1137; it reads CSLCGSLLTSSVVNVQQKKLIQEIGKLPPGRTPKKVTCYSC.

Belongs to the RNA polymerase beta chain family. In terms of assembly, component of the RNA polymerase I (Pol I) complex consisting of at least 13 subunits.

It is found in the nucleus. The enzyme catalyses RNA(n) + a ribonucleoside 5'-triphosphate = RNA(n+1) + diphosphate. Functionally, DNA-dependent RNA polymerase catalyzes the transcription of DNA into RNA using the four ribonucleoside triphosphates as substrates. Second largest core component of RNA polymerase I which synthesizes ribosomal RNA precursors. Proposed to contribute to the polymerase catalytic activity and forms the polymerase active center together with the largest subunit. Pol I is composed of mobile elements and NRPA2 is part of the core element with the central large cleft and probably a clamp element that moves to open and close the cleft. In terms of biological role, essential for the completion of the three rounds of mitosis in female megaspores required for the development of mature gametophytes. In Arabidopsis thaliana (Mouse-ear cress), this protein is DNA-directed RNA polymerase I subunit 2.